Reading from the N-terminus, the 1217-residue chain is CST complex subunit CTC1 (1217 aa).

A disordered region spans residues 328–347; sequence EADPKPLPMPSNSEDKKDPE.

This sequence belongs to the CTC1 family. As to quaternary structure, component of the CST complex, composed of TEN1/C17orf106, CTC1/C17orf68 and STN1; in the complex interacts directly with STN1. Interacts with ACD and POT1.

It localises to the nucleus. The protein localises to the chromosome. Its subcellular location is the telomere. In terms of biological role, component of the CST complex proposed to act as a specialized replication factor promoting DNA replication under conditions of replication stress or natural replication barriers such as the telomere duplex. The CST complex binds single-stranded DNA with high affinity in a sequence-independent manner, while isolated subunits bind DNA with low affinity by themselves. Initially the CST complex has been proposed to protect telomeres from DNA degradation. However, the CST complex has been shown to be involved in several aspects of telomere replication. The CST complex inhibits telomerase and is involved in telomere length homeostasis; it is proposed to bind to newly telomerase-synthesized 3' overhangs and to terminate telomerase action implicating the association with the ACD:POT1 complex thus interfering with its telomerase stimulation activity. The CST complex is also proposed to be involved in fill-in synthesis of the telomeric C-strand probably implicating recruitment and activation of DNA polymerase alpha. The CST complex facilitates recovery from many forms of exogenous DNA damage; seems to be involved in the re-initiation of DNA replication at repaired forks and/or dormant origins. Involved in telomere maintenance. Involved in genome stability. May be in involved in telomeric C-strand fill-in during late S/G2 phase. The sequence is that of CST complex subunit CTC1 (CTC1) from Homo sapiens (Human).